The chain runs to 361 residues: MQTYGNPDPTYGWWVGNSVVTNKSSRFIGSHVAHTGLIAFTAGANTLWELARFNPDIPMGHQGMVSIPHLASLGIGFDQAGAWTGQDVAFVGIFHLICSFVYALAGLLHSVIFSEDTQNSSGLFADGRPEHRQAARFKLEWDNPDNQTFILGHHLVFFGVANIWFVEWARVHGIYDPAIEAIRQVNYNLDLTQIWNHQFDFIQIDSLEDVMGGHAFLAFFQIGGGAFHIATKQIGTYTNFKGAGLLSAEAVLSWSLAGIGWMAIIAAFWCATNTTVYPEAWYGETLQLKFGISPYWIDTGNMDGVVTGHTSRAWLSNVHYYLGFFFIQGHLWHAIRAMGFDFRKVTSAVANLDNSRITLSD.

Helical transmembrane passes span 27–47 (FIGSHVAHTGLIAFTAGANTL), 88–108 (VAFVGIFHLICSFVYALAGLL), 149–169 (FILGHHLVFFGVANIWFVEWA), 210–230 (VMGGHAFLAFFQIGGGAFHIA), 250–270 (AVLSWSLAGIGWMAIIAAFWC), and 315–335 (LSNVHYYLGFFFIQGHLWHAI).

It belongs to the PsbB/PsbC family. IsiA/Pcb subfamily. The antenna complex consists of divinyl chlorophylls (a and b) and divinyl chlorophyll a/b binding proteins and binds more divinyl chlorophyll b than does the antenna complex from high-light-adapted Prochlorococcus. Requires divinyl chlorophyll a as cofactor. Divinyl chlorophyll b serves as cofactor.

It is found in the cellular thylakoid membrane. Its function is as follows. The antenna complex functions as a light receptor, it captures and delivers excitation energy to photosystems II and I. The Prochlorales pcb genes are not related to higher plant LHCs. The sequence is that of Divinyl chlorophyll a/b light-harvesting protein PcbE (pcbE) from Prochlorococcus marinus (strain SARG / CCMP1375 / SS120).